The sequence spans 216 residues: Glycerol-3-phosphate acyltransferase 3 (216 aa).

The next 5 helical transmembrane spans lie at 6-26, 58-78, 92-112, 125-145, and 158-178; these read LLLV…YLVS, LVAS…GLVI, LLFA…WPVF, FGGM…VLII, and ITGV…SGFP.

Belongs to the PlsY family. Probably interacts with PlsX.

The protein resides in the cell membrane. The catalysed reaction is an acyl phosphate + sn-glycerol 3-phosphate = a 1-acyl-sn-glycero-3-phosphate + phosphate. It functions in the pathway lipid metabolism; phospholipid metabolism. Functionally, catalyzes the transfer of an acyl group from acyl-phosphate (acyl-PO(4)) to glycerol-3-phosphate (G3P) to form lysophosphatidic acid (LPA). This enzyme utilizes acyl-phosphate as fatty acyl donor, but not acyl-CoA or acyl-ACP. The chain is Glycerol-3-phosphate acyltransferase 3 from Dehalococcoides mccartyi (strain CBDB1).